Here is a 370-residue protein sequence, read N- to C-terminus: MNVGIFIPIGNNGWLLSENAPQYKPSFELNKEITLTAERYGVDFVLSMIKLRGFGGKTEFWDHNLESFTLMAGLAAVTTKIKLFATAASLVMPPAIVARMASTIDSISNGRFGLNLVTGWQRPEYSQMGMWPGDQFFGTRYQYLSEYIQVLRELWGKGQSDFKGDHFQMDDCRLSPQPQADMKVICAGQSDAGMDFSARYADYNFCFGKGVNTPKAFAPAAEKLIEATRKTGRHVTTYVLMMVIADETDEAARAKWEHYKAGADHEAIAWLGQQGAADTRSGADTNVRQMADPTSAVNINMGTLVGSYATVARLLDEMAEVPGTEGVLLTFDDFVQGVAAFGERIQPLMKSRVHVQSPVPSQAEAERLAA.

FMN contacts are provided by residues 49 to 50 (IK), asparagine 115, glutamate 124, 140 to 141 (RY), and serine 190.

The protein belongs to the NtaA/SnaA/DszA monooxygenase family. RutA subfamily.

It catalyses the reaction uracil + FMNH2 + NADH + O2 = (Z)-3-ureidoacrylate + FMN + NAD(+) + H2O + H(+). The enzyme catalyses thymine + FMNH2 + NADH + O2 = (Z)-2-methylureidoacrylate + FMN + NAD(+) + H2O + H(+). Its function is as follows. Catalyzes the pyrimidine ring opening between N-3 and C-4 by an unusual flavin hydroperoxide-catalyzed mechanism, adding oxygen atoms in the process to yield ureidoacrylate peracid, that immediately reacts with FMN forming ureidoacrylate and FMN-N(5)-oxide. The FMN-N(5)-oxide reacts spontaneously with NADH to produce FMN. Requires the flavin reductase RutF to regenerate FMN in vivo. This is Pyrimidine monooxygenase RutA from Variovorax paradoxus (strain S110).